The following is a 416-amino-acid chain: Fusaric acid cluster transcription factor FUB10 (416 aa).

Positions 16 to 47 (CDRCRAQKLRCHRDSGHSTDACLRCLKSGIEC) form a DNA-binding region, zn(2)-C6 fungal-type. Residues 50–92 (SKARPTGRPPSRQVQPTVSVEQGDTSSSSHTTDSSPSAGGTDI) are disordered. The segment covering 61–73 (RQVQPTVSVEQGD) has biased composition (polar residues). The segment covering 74-86 (TSSSSHTTDSSPS) has biased composition (low complexity).

Its subcellular location is the nucleus. Its function is as follows. Transcription factor that regulates the expression of the gene cluster that mediates the biosynthesis of fusaric acid, a mycotoxin with low to moderate toxicity to animals and humans, but with high phytotoxic properties. This Fusarium oxysporum f. sp. lycopersici (strain 4287 / CBS 123668 / FGSC 9935 / NRRL 34936) (Fusarium vascular wilt of tomato) protein is Fusaric acid cluster transcription factor FUB10.